A 689-amino-acid polypeptide reads, in one-letter code: Elongation factor G (689 aa).

One can recognise a tr-type G domain in the interval 9 to 283; that stretch reads AKFRNIGIMA…AIIEFMPSPL (275 aa). GTP-binding positions include 18 to 25, 82 to 86, and 136 to 139; these read AHIDAGKT, DTPGH, and NKMD.

This sequence belongs to the TRAFAC class translation factor GTPase superfamily. Classic translation factor GTPase family. EF-G/EF-2 subfamily.

The protein localises to the cytoplasm. Its function is as follows. Catalyzes the GTP-dependent ribosomal translocation step during translation elongation. During this step, the ribosome changes from the pre-translocational (PRE) to the post-translocational (POST) state as the newly formed A-site-bound peptidyl-tRNA and P-site-bound deacylated tRNA move to the P and E sites, respectively. Catalyzes the coordinated movement of the two tRNA molecules, the mRNA and conformational changes in the ribosome. In Clostridium botulinum (strain Okra / Type B1), this protein is Elongation factor G.